We begin with the raw amino-acid sequence, 337 residues long: Oxidoreductase andH (337 aa).

The protein belongs to the NmrA-type oxidoreductase family.

It participates in secondary metabolite biosynthesis; terpenoid biosynthesis. In terms of biological role, oxidoreductase; part of the gene cluster that mediates the biosynthesis of anditomin, a fungal meroterpenoid. The first step of the pathway is the synthesis of 3,5-dimethylorsellinic acid (DMOA) by the polyketide synthase andM. DMOA is then converted to the phthalide compound 5,7-dihydroxy-4,6-dimethylphthalide (DHDMP) by the cytochrome P450 monooxygenase andK, which is further prenylated by the prenyltransferase andD to yield farnesyl-DHDMP. Further epoxidation by the FAD-dependent monooxygenase andE leads to epoxyfarnesyl-DHDMP. The next step involves the terpene cyclase andB that converts epoxyfarnesyl-DHDMP into preandiloid A through opening of the epoxide ring followed by the cyclization of the farnesyl moiety. Preandiloid A is in turn oxidized at the C-3 hydroxyl group to yield preandiloid B by the dehydrogenase andC. The dioxygenase andA is solely responsible for the dehydrogenation of preandiloid B leading to the enone preandiloid C, as well as for the intriguing structural rearrangement to generate the bicyclo[2.2.2]octane core, transforming preandiloid C into andiconin. FAD-binding monooxygenase andJ then produces andilesin D which is reduced by dehydrogenase andI to yield andilesin A. Action of acetyltransferase andG followed by a spontaneous acetate elimination leads then to andilesin B, which is in turn substrate of the short chain dehydrogenase andH to yield andilesin C. Finally, the dioxygenase andF catalyzes the transformation of andilesin C to anditomin. The polypeptide is Oxidoreductase andH (Emericella variicolor (Aspergillus stellatus)).